Consider the following 554-residue polypeptide: MRATLATLAVLALATAVQSDSRARIVCYFSNWAVYRPGVGRYGIEDIPVEKCTHIIYSFIGVTEGNSEVLIIDPELDVDKNGFRNFTSLRSSHPSVKFMVAVGGWAEGSSKYSHMVAQKSTRMSFIRSVVSFLKKYDFDGLDLDWEYPGAADRGGSFSDKDKFLYLVQELRRAFIRVGKGWELTAAVPLANFRLMEGYHVPELCQELDAIHVMSYDLRGNWAGFADVHSPLYKRPHDQWAYEKLNVNDGLHLWEEKGCPSNKLVVGIPFYGRSFTLSAGNNNYGLGTFINKEAGGGDPAPYTNATGFWAYYEICTEVDKDDSGWTKKWDEQGKCPYAYKGTQWVGYEDPRSVEIKMNWIKQKGYLGAMTWAIDMDDFQGLCGEKNPLIKILHKHMSSYTVPPPHTENTTPTPEWARPPSTPSDPSEGDPIPTTTTAKPASTTKTTVKTTTTTTAKPPQSVIDEENDINVRPEPKPEPQPEPEVEVPPTENEVDGSEICNSDQDYIPDKKHCDKYWRCVNGEAMQFSCQHGTVFNVELNVCDWPSNATRRECQQP.

The N-terminal stretch at 1 to 19 is a signal peptide; the sequence is MRATLATLAVLALATAVQS. One can recognise a GH18 domain in the interval 23 to 398; it reads ARIVCYFSNW…KILHKHMSSY (376 aa). C27 and C52 are disulfide-bonded. 76–77 serves as a coordination point for chitin; sequence LD. N-linked (GlcNAc...) asparagine glycosylation occurs at N85. Chitin is bound at residue 103–106; sequence GGWA. E146 acts as the Proton donor in catalysis. Chitin contacts are provided by residues Y147 and 213–216; that span reads MSYD. Residue N303 is glycosylated (N-linked (GlcNAc...) asparagine). W370 contributes to the chitin binding site. The interval 398–494 is disordered; sequence YTVPPPHTEN…VPPTENEVDG (97 aa). Positions 431-457 are enriched in low complexity; the sequence is PTTTTAKPASTTKTTVKTTTTTTAKPP. Basic and acidic residues predominate over residues 467 to 477; the sequence is INVRPEPKPEP. The 59-residue stretch at 495-553 folds into the Chitin-binding type-2 domain; the sequence is SEICNSDQDYIPDKKHCDKYWRCVNGEAMQFSCQHGTVFNVELNVCDWPSNATRRECQQ. C527 and C540 form a disulfide bridge. N545 is a glycosylation site (N-linked (GlcNAc...) asparagine).

The protein belongs to the glycosyl hydrolase 18 family. Chitinase class II subfamily. Epidermis and gut.

The protein resides in the secreted. It catalyses the reaction Random endo-hydrolysis of N-acetyl-beta-D-glucosaminide (1-&gt;4)-beta-linkages in chitin and chitodextrins.. Its function is as follows. Digests chitin in the exoskeleton during the molting process. This chain is Endochitinase, found in Manduca sexta (Tobacco hawkmoth).